We begin with the raw amino-acid sequence, 239 residues long: Large ribosomal subunit protein uL1 (239 aa).

This sequence belongs to the universal ribosomal protein uL1 family. As to quaternary structure, part of the 50S ribosomal subunit.

In terms of biological role, binds directly to 23S rRNA. The L1 stalk is quite mobile in the ribosome, and is involved in E site tRNA release. Functionally, protein L1 is also a translational repressor protein, it controls the translation of the L11 operon by binding to its mRNA. This chain is Large ribosomal subunit protein uL1, found in Rickettsia conorii (strain ATCC VR-613 / Malish 7).